Reading from the N-terminus, the 313-residue chain is Bifunctional pinoresinol-lariciresinol reductase 1 (313 aa).

NADP(+) contacts are provided by residues glycine 11–glycine 17, arginine 36, and lysine 45. Lysine 138 acts as the Proton acceptor in catalysis. Residue arginine 142 participates in NADP(+) binding. Histidine 271 provides a ligand contact to substrate.

It belongs to the NmrA-type oxidoreductase family. Isoflavone reductase subfamily. As to quaternary structure, dimer.

It catalyses the reaction (+)-lariciresinol + NADP(+) = (+)-pinoresinol + NADPH + H(+). It carries out the reaction (-)-lariciresinol + NADP(+) = (-)-pinoresinol + NADPH + H(+). The enzyme catalyses (+)-secoisolariciresinol + NADP(+) = (-)-lariciresinol + NADPH + H(+). Functionally, reductase involved in lignan biosynthesis. Catalyzes the enantioselective sequential conversion of (-)-pinoresinol into (-)-lariciresinol and of (-)-lariciresinol into (+)-secoisolariciresinol. Can also convert with a lower efficiency (+)-pinoresinol into (+)-lariciresinol, but not (+)-lariciresinol into (-)-secoisolariciresinol. Abstracts the 4R-hydride from the NADPH cofactor during catalysis. The chain is Bifunctional pinoresinol-lariciresinol reductase 1 (PLR_Tp1) from Thuja plicata (Western red-cedar).